The sequence spans 124 residues: Small ribosomal subunit protein uS13 (124 aa).

The disordered stretch occupies residues 94–124; sequence GLPLRGQRTKNNSRTRKGKRKTVANKKKATK. Positions 100-124 are enriched in basic residues; it reads QRTKNNSRTRKGKRKTVANKKKATK.

It belongs to the universal ribosomal protein uS13 family. Part of the 30S ribosomal subunit. Forms a loose heterodimer with protein S19. Forms two bridges to the 50S subunit in the 70S ribosome.

Functionally, located at the top of the head of the 30S subunit, it contacts several helices of the 16S rRNA. In the 70S ribosome it contacts the 23S rRNA (bridge B1a) and protein L5 of the 50S subunit (bridge B1b), connecting the 2 subunits; these bridges are implicated in subunit movement. Contacts the tRNAs in the A and P-sites. The protein is Small ribosomal subunit protein uS13 of Flavobacterium psychrophilum (strain ATCC 49511 / DSM 21280 / CIP 103535 / JIP02/86).